Here is a 255-residue protein sequence, read N- to C-terminus: Large ribosomal subunit protein uL4 (255 aa).

Belongs to the universal ribosomal protein uL4 family. As to quaternary structure, part of the 50S ribosomal subunit.

Its function is as follows. One of the primary rRNA binding proteins, this protein initially binds near the 5'-end of the 23S rRNA. It is important during the early stages of 50S assembly. It makes multiple contacts with different domains of the 23S rRNA in the assembled 50S subunit and ribosome. Forms part of the polypeptide exit tunnel. The protein is Large ribosomal subunit protein uL4 of Pyrococcus furiosus (strain ATCC 43587 / DSM 3638 / JCM 8422 / Vc1).